Reading from the N-terminus, the 231-residue chain is Octanoyl-[acyl-carrier-protein]:protein N-octanoyltransferase LIPT2, mitochondrial (231 aa).

The N-terminal 31 residues, 1 to 31 (MRQPAVRLVRLGRVPYAELLGLQDRWLRRLQ), are a transit peptide targeting the mitochondrion. The BPL/LPL catalytic domain occupies 41-224 (GTEAGALLLC…AFKEIYKCTL (184 aa)). Substrate-binding positions include 85 to 92 (RGGLATFH), 154 to 156 (AIG), and 167 to 169 (GLA). Cys185 acts as the Acyl-thioester intermediate in catalysis.

The protein belongs to the LipB family.

The protein localises to the mitochondrion. It carries out the reaction octanoyl-[ACP] + L-lysyl-[protein] = N(6)-octanoyl-L-lysyl-[protein] + holo-[ACP] + H(+). It participates in protein modification; protein lipoylation via endogenous pathway; protein N(6)-(lipoyl)lysine from octanoyl-[acyl-carrier-protein]: step 1/2. In terms of biological role, catalyzes the transfer of endogenously produced octanoic acid from octanoyl-acyl-carrier-protein (octanoyl-ACP) onto the lipoyl domains of lipoate-dependent enzymes such as the protein H of the glycine cleavage system (GCSH). Lipoyl-ACP can also act as a substrate although octanoyl-ACP is likely to be the physiological substrate. The sequence is that of Octanoyl-[acyl-carrier-protein]:protein N-octanoyltransferase LIPT2, mitochondrial from Homo sapiens (Human).